A 455-amino-acid chain; its full sequence is MSFLIDSSIMVTSQVLFFGFGWLFFMRKLFKDYEVRQYVVQVIFSVTFAFSCTMFELIIFEILGVLNSSSRYFHWKLNLCVILLILVFMVPFYIGYFVVSNIRLLHRQKLLFACVLWLTFMYFFWKLGDPFPILSPKHGILSIEQLISRVGVIGVTLMALLSGFGAVNCPYTYMSYFLRNVTDADILALERRLLQTMDMIISKKKRIAVAHRTMFQRGEVHNKPTGFWGMIKSVTTSVAGSENLSLIQQEVDALEELSRQLFLETADLHATKERIEYSKTFQGKYFNFLGYFFSIYCVWKIFMATINIVFDRVGKTDPVTRGIEITVNYLGIQFDVKFWSQHISFILVGIIIVTSIRGLLITLTKFFYAISSSKSSNVIVLLLAQIMGMYFVSSVLLIRMSMPLEYRTIITEVLGELQFNFYHRWFDVIFLVSALSSILFLYLAHKQAPEKHMAL.

A run of 2 helical transmembrane segments spans residues 5–25 (IDSS…WLFF) and 46–66 (VTFA…LGVL). Residue N67 is glycosylated (N-linked (GlcNAc...) asparagine). Transmembrane regions (helical) follow at residues 79–99 (LCVI…YFVV), 111–131 (LFAC…GDPF), and 150–170 (VGVI…VNCP). 2 N-linked (GlcNAc...) asparagine glycosylation sites follow: N180 and N243. A run of 4 helical transmembrane segments spans residues 290 to 310 (GYFF…NIVF), 343 to 363 (ISFI…LITL), 378 to 398 (VIVL…VLLI), and 425 to 445 (WFDV…YLAH).

Belongs to the Golgi pH regulator (TC 1.A.38) family. In terms of assembly, homotrimer.

The protein resides in the golgi apparatus membrane. The enzyme catalyses iodide(out) = iodide(in). The catalysed reaction is chloride(in) = chloride(out). It catalyses the reaction bromide(in) = bromide(out). It carries out the reaction fluoride(in) = fluoride(out). Its function is as follows. Voltage-gated channel that enables the transfer of anions such as iodide, chloride, bromide and fluoride which may function in counter-ion conductance and participates in Golgi acidification. The polypeptide is Golgi pH regulator (Gallus gallus (Chicken)).